The following is a 346-amino-acid chain: MTQSLTITRPDDWHLHLRDGDMLRAVLPETARHFGRAIIMPNLVPPVVTGAEASAYRDRILAALPEGMTFEPLMTLYLTEDTDPADVAAAHASGLVKAVKLYPAGATTNSSSGVRDFDKVRPVLEKMAEIGLPLCTHGEVTDHDIDIFDREAVFIDRVLDPIRQSTPGLRVVMEHITTKDAADYVRSQDKDLGATITTHHLIINRNHILVGGIKPHYYCLPVAKREEHRLALRQAATSGDARFFLGTDSAPHTDANKLQTCGCAGCFTATNTMALLAHVFEEEGALDKLEGFASKNGPAFYRLPENDGQITLVKQDAPVAFPEQIDTPDGPVTVFDPSFAVHWTVT.

H14 and H16 together coordinate Zn(2+). Residues 16 to 18 (HLR) and N42 each bind substrate. Zn(2+) contacts are provided by K100, H137, and H175. K100 carries the N6-carboxylysine modification. A substrate-binding site is contributed by H137. A substrate-binding site is contributed by L220. D248 provides a ligand contact to Zn(2+). D248 is a catalytic residue. Substrate contacts are provided by H252 and A264.

Belongs to the metallo-dependent hydrolases superfamily. DHOase family. Class II DHOase subfamily. Homodimer. The cofactor is Zn(2+).

The catalysed reaction is (S)-dihydroorotate + H2O = N-carbamoyl-L-aspartate + H(+). The protein operates within pyrimidine metabolism; UMP biosynthesis via de novo pathway; (S)-dihydroorotate from bicarbonate: step 3/3. In terms of biological role, catalyzes the reversible cyclization of carbamoyl aspartate to dihydroorotate. The chain is Dihydroorotase from Ruegeria sp. (strain TM1040) (Silicibacter sp.).